Reading from the N-terminus, the 345-residue chain is uncharacterized protein (345 aa).

Its subcellular location is the plastid. The protein localises to the chloroplast. This is an uncharacterized protein from Chlamydomonas moewusii (Chlamydomonas eugametos).